We begin with the raw amino-acid sequence, 447 residues long: Glutamyl-tRNA(Gln) amidotransferase subunit A (447 aa).

Active-site charge relay system residues include lysine 50 and serine 125. Serine 149 serves as the catalytic Acyl-ester intermediate.

Belongs to the amidase family. GatA subfamily. Heterotrimer of A, B and C subunits.

It catalyses the reaction L-glutamyl-tRNA(Gln) + L-glutamine + ATP + H2O = L-glutaminyl-tRNA(Gln) + L-glutamate + ADP + phosphate + H(+). Functionally, allows the formation of correctly charged Gln-tRNA(Gln) through the transamidation of misacylated Glu-tRNA(Gln) in organisms which lack glutaminyl-tRNA synthetase. The reaction takes place in the presence of glutamine and ATP through an activated gamma-phospho-Glu-tRNA(Gln). This is Glutamyl-tRNA(Gln) amidotransferase subunit A from Sulfurimonas denitrificans (strain ATCC 33889 / DSM 1251) (Thiomicrospira denitrificans (strain ATCC 33889 / DSM 1251)).